The following is a 152-amino-acid chain: UPF0336 protein Tfu_2666 (152 aa).

A MaoC-like domain is found at 7-116 (YLGRAYELPE…TTITDIKSLA (110 aa)).

This sequence belongs to the UPF0336 family.

This chain is UPF0336 protein Tfu_2666, found in Thermobifida fusca (strain YX).